Consider the following 123-residue polypeptide: Small ribosomal subunit protein uS12 (123 aa).

Asp89 carries the post-translational modification 3-methylthioaspartic acid.

The protein belongs to the universal ribosomal protein uS12 family. As to quaternary structure, part of the 30S ribosomal subunit. Contacts proteins S8 and S17. May interact with IF1 in the 30S initiation complex.

In terms of biological role, with S4 and S5 plays an important role in translational accuracy. Interacts with and stabilizes bases of the 16S rRNA that are involved in tRNA selection in the A site and with the mRNA backbone. Located at the interface of the 30S and 50S subunits, it traverses the body of the 30S subunit contacting proteins on the other side and probably holding the rRNA structure together. The combined cluster of proteins S8, S12 and S17 appears to hold together the shoulder and platform of the 30S subunit. This chain is Small ribosomal subunit protein uS12, found in Caulobacter vibrioides (strain ATCC 19089 / CIP 103742 / CB 15) (Caulobacter crescentus).